The following is a 65-amino-acid chain: MKFIKLFTFLVYLFVTLTNVFAFPDGMMCLNLDGSVGGYGCVFRRVESPTTTTKNYCDYYYCEDD.

Residues Met1–Ala22 form the signal peptide.

This is an uncharacterized protein from Invertebrate iridescent virus 6 (IIV-6).